A 29-amino-acid polypeptide reads, in one-letter code: GFPTCGETCTLGTCNTPGCTCSWPICTRN.

A cross-link (cyclopeptide (Gly-Asn)) is located at residues 1–29; sequence GFPTCGETCTLGTCNTPGCTCSWPICTRN. Cystine bridges form between cysteine 5–cysteine 19, cysteine 9–cysteine 21, and cysteine 14–cysteine 26.

The protein belongs to the cyclotide family. Moebius subfamily. In terms of processing, this is a cyclic peptide.

Its function is as follows. Probably participates in a plant defense mechanism. The chain is Cyclotide mobo-A from Melicytus obovatus (Hymenanthera obovata).